The chain runs to 106 residues: Iron-sulfur cluster assembly protein CyaY (106 aa).

It belongs to the frataxin family.

In terms of biological role, involved in iron-sulfur (Fe-S) cluster assembly. May act as a regulator of Fe-S biogenesis. The protein is Iron-sulfur cluster assembly protein CyaY of Photorhabdus laumondii subsp. laumondii (strain DSM 15139 / CIP 105565 / TT01) (Photorhabdus luminescens subsp. laumondii).